A 95-amino-acid polypeptide reads, in one-letter code: Large ribosomal subunit protein eL37y (95 aa).

4 residues coordinate Zn(2+): cysteine 19, cysteine 22, cysteine 34, and cysteine 37. The C4-type zinc finger occupies 19 to 37 (CVRCGRRSFHIQKSRCSAC).

Belongs to the eukaryotic ribosomal protein eL37 family. Zn(2+) is required as a cofactor.

Its function is as follows. Binds to the 23S rRNA. The protein is Large ribosomal subunit protein eL37y (RPL37B) of Arabidopsis thaliana (Mouse-ear cress).